A 376-amino-acid polypeptide reads, in one-letter code: Alcohol dehydrogenase class-3 (376 aa).

Residues Cys-40, His-62, Cys-92, Cys-95, Cys-98, Cys-106, and Cys-170 each contribute to the Zn(2+) site.

This sequence belongs to the zinc-containing alcohol dehydrogenase family. Class-III subfamily. As to quaternary structure, homodimer. It depends on Zn(2+) as a cofactor.

The protein localises to the cytoplasm. It catalyses the reaction a primary alcohol + NAD(+) = an aldehyde + NADH + H(+). The catalysed reaction is a secondary alcohol + NAD(+) = a ketone + NADH + H(+). The enzyme catalyses S-(hydroxymethyl)glutathione + NADP(+) = S-formylglutathione + NADPH + H(+). It carries out the reaction S-(hydroxymethyl)glutathione + NAD(+) = S-formylglutathione + NADH + H(+). Functionally, oxidizes long-chain aliphatic alcohols, long-chain hydroxylated fatty acids and S-hydroxymethylglutathione (hmGSH) in increasing order of preference. Shows little or no activity with short-chain aliphatic alcohols. This chain is Alcohol dehydrogenase class-3 (adhI), found in Cereibacter sphaeroides (strain ATCC 17023 / DSM 158 / JCM 6121 / CCUG 31486 / LMG 2827 / NBRC 12203 / NCIMB 8253 / ATH 2.4.1.) (Rhodobacter sphaeroides).